Reading from the N-terminus, the 463-residue chain is Chromogranin-A (463 aa).

An N-terminal signal peptide occupies residues methionine 1–alanine 18. Cysteine 35 and cysteine 56 are disulfide-bonded. Residues lysine 88–leucine 440 form a disordered region. A compositionally biased stretch (low complexity) spans glutamine 92–glutamine 116. Serine 119 carries the post-translational modification Phosphoserine. A compositionally biased stretch (basic and acidic residues) spans aspartate 134 to glutamine 160. Positions threonine 196–serine 208 are enriched in polar residues. Phosphoserine is present on residues serine 220, serine 282, and serine 308. A compositionally biased stretch (basic and acidic residues) spans glycine 301–glutamine 310. Position 329 is a glycine amide (glycine 329). Basic and acidic residues-rich tracts occupy residues lysine 331–glutamate 340 and arginine 348–glutamate 375. A phosphoserine mark is found at serine 350 and serine 383. Position 384 is a methionine sulfoxide (methionine 384). The segment covering serine 409 to aspartate 437 has biased composition (basic and acidic residues). 3 positions are modified to phosphoserine: serine 410, serine 414, and serine 430. O-linked (Xyl...) (chondroitin sulfate) serine glycosylation occurs at serine 430. The residue at position 438 (glutamine 438) is a Pyrrolidone carboxylic acid. Serine 444 carries the phosphoserine modification.

Belongs to the chromogranin/secretogranin protein family. Self-interacts; self-assembly is promoted in vitro by chondroitin sulfate attachment which occurs at mildly acidic pH conditions. Interacts with SCG3; this interaction is optimal in conditions mimicking the lumenal milieu of the trans-Golgi network, i.e. pH 5.5 and 10 mM Ca(+2). Interacts with ITPR1 in the secretory granules. Post-translationally, O-glycosylated; contains chondroitin sulfate (CS). CS attachment is pH-dependent, being observed at mildly acidic conditions of pH 5 but not at neutral pH, and promotes self-assembly in vitro.

It localises to the cytoplasmic vesicle. The protein resides in the secretory vesicle. Its subcellular location is the neuronal dense core vesicle. It is found in the secreted. In terms of biological role, strongly inhibits glucose induced insulin release from the pancreas. Functionally, inhibits catecholamine release from chromaffin cells and noradrenergic neurons by acting as a non-competitive nicotinic cholinergic antagonist. Can induce mast cell migration, degranulation and production of cytokines and chemokines. Regulates granule biogenesis in endocrine cells by up-regulating the transcription of protease nexin 1 (SERPINE2) via a cAMP-PKA-SP1 pathway. This leads to inhibition of granule protein degradation in the Golgi complex which in turn promotes granule formation. Pyroglutaminated (pGlu)-serpinin exerts an antiapoptotic effect on cells exposed to oxidative stress. This Mus musculus (Mouse) protein is Chromogranin-A (Chga).